The following is a 183-amino-acid chain: ATP synthase subunit delta (183 aa).

This sequence belongs to the ATPase delta chain family. F-type ATPases have 2 components, F(1) - the catalytic core - and F(0) - the membrane proton channel. F(1) has five subunits: alpha(3), beta(3), gamma(1), delta(1), epsilon(1). F(0) has three main subunits: a(1), b(2) and c(10-14). The alpha and beta chains form an alternating ring which encloses part of the gamma chain. F(1) is attached to F(0) by a central stalk formed by the gamma and epsilon chains, while a peripheral stalk is formed by the delta and b chains.

Its subcellular location is the cell inner membrane. In terms of biological role, f(1)F(0) ATP synthase produces ATP from ADP in the presence of a proton or sodium gradient. F-type ATPases consist of two structural domains, F(1) containing the extramembraneous catalytic core and F(0) containing the membrane proton channel, linked together by a central stalk and a peripheral stalk. During catalysis, ATP synthesis in the catalytic domain of F(1) is coupled via a rotary mechanism of the central stalk subunits to proton translocation. Its function is as follows. This protein is part of the stalk that links CF(0) to CF(1). It either transmits conformational changes from CF(0) to CF(1) or is implicated in proton conduction. This Verminephrobacter eiseniae (strain EF01-2) protein is ATP synthase subunit delta.